The sequence spans 254 residues: Adenosylcobinamide-GDP ribazoletransferase (254 aa).

Helical transmembrane passes span 36-56, 61-81, 114-134, 138-158, 197-217, and 232-252; these read YYPL…TLLL, PLVT…GIHL, ALSA…LLAL, LVPY…LIGV, WVLQ…ILLF, and LYGA…FPLL.

Belongs to the CobS family. Mg(2+) serves as cofactor.

The protein resides in the cell membrane. It catalyses the reaction alpha-ribazole + adenosylcob(III)inamide-GDP = adenosylcob(III)alamin + GMP + H(+). It carries out the reaction alpha-ribazole 5'-phosphate + adenosylcob(III)inamide-GDP = adenosylcob(III)alamin 5'-phosphate + GMP + H(+). Its pathway is cofactor biosynthesis; adenosylcobalamin biosynthesis; adenosylcobalamin from cob(II)yrinate a,c-diamide: step 7/7. Its function is as follows. Joins adenosylcobinamide-GDP and alpha-ribazole to generate adenosylcobalamin (Ado-cobalamin). Also synthesizes adenosylcobalamin 5'-phosphate from adenosylcobinamide-GDP and alpha-ribazole 5'-phosphate. The polypeptide is Adenosylcobinamide-GDP ribazoletransferase (Desulfitobacterium hafniense (strain Y51)).